The sequence spans 31 residues: Cytochrome b6-f complex subunit 6 (31 aa).

The chain crosses the membrane as a helical span at residues 4-24 (ITSYFGFLLAALTITSALFIG).

The protein belongs to the PetL family. As to quaternary structure, the 4 large subunits of the cytochrome b6-f complex are cytochrome b6, subunit IV (17 kDa polypeptide, PetD), cytochrome f and the Rieske protein, while the 4 small subunits are PetG, PetL, PetM and PetN. The complex functions as a dimer.

The protein resides in the plastid. The protein localises to the chloroplast thylakoid membrane. Functionally, component of the cytochrome b6-f complex, which mediates electron transfer between photosystem II (PSII) and photosystem I (PSI), cyclic electron flow around PSI, and state transitions. PetL is important for photoautotrophic growth as well as for electron transfer efficiency and stability of the cytochrome b6-f complex. The chain is Cytochrome b6-f complex subunit 6 from Gossypium hirsutum (Upland cotton).